The sequence spans 1166 residues: IQ domain-containing protein N (1166 aa).

A compositionally biased stretch (polar residues) spans 1–19; the sequence is MQPATQLQFTNHLSPNGQC. A disordered region spans residues 1–56; it reads MQPATQLQFTNHLSPNGQCILQPPPTPSLPDKMEKAPPQPQHEGLKSEEHLPQQPA. Residues 89 to 118 form the IQ 1 domain; the sequence is HARAATLIQANWRGYRLRQKLISQMTAAKA. Disordered stretches follow at residues 431-450, 769-797, and 829-848; these read VCPG…VATP, LSAP…TTQG, and DSGA…PCQE. 5 IQ domains span residues 907-932, 928-955, 952-979, 1091-1119, and 1114-1143; these read AVTT…RRAT, HRRA…RATT, RATT…MLHP, RDKA…MAAK, and QQMA…LLGP. A disordered region spans residues 1145–1166; that stretch reads DPWSSSQHMHWASSQHTHWPGI. The segment covering 1147-1166 has biased composition (polar residues); sequence WSSSQHMHWASSQHTHWPGI.

In terms of assembly, interacts with calmodulin.

Essential for spermiogenesis and fertilization. May be required for manchette assembly in elongating spermatids. The protein is IQ domain-containing protein N (IQCN) of Macaca fascicularis (Crab-eating macaque).